We begin with the raw amino-acid sequence, 180 residues long: Immediate early response gene 2 protein (180 aa).

The tract at residues 53 to 135 (MSEKSGQSVT…KRRSKTATDS (83 aa)) is disordered. A compositionally biased stretch (polar residues) spans 56-92 (KSGQSVTEECTSHTQEPMDTSSSTATPLRETSGQSSE). A compositionally biased stretch (basic and acidic residues) spans 93–103 (DGQRSGLEGHP).

This sequence belongs to the IER family. As to quaternary structure, interacts with FIBPB.

It localises to the nucleus. The protein resides in the cytoplasm. Functionally, DNA-binding protein that seems to act as a transcription factor. Mediates with FIBPB FGF-signaling in Kupffer's vesicle ciliogenesis and in the establishment of laterality in the embryo. The sequence is that of Immediate early response gene 2 protein from Danio rerio (Zebrafish).